Here is a 315-residue protein sequence, read N- to C-terminus: Methionyl-tRNA formyltransferase (315 aa).

113 to 116 (SLLP) contributes to the (6S)-5,6,7,8-tetrahydrofolate binding site.

This sequence belongs to the Fmt family.

The enzyme catalyses L-methionyl-tRNA(fMet) + (6R)-10-formyltetrahydrofolate = N-formyl-L-methionyl-tRNA(fMet) + (6S)-5,6,7,8-tetrahydrofolate + H(+). Its function is as follows. Attaches a formyl group to the free amino group of methionyl-tRNA(fMet). The formyl group appears to play a dual role in the initiator identity of N-formylmethionyl-tRNA by promoting its recognition by IF2 and preventing the misappropriation of this tRNA by the elongation apparatus. The protein is Methionyl-tRNA formyltransferase of Escherichia coli O45:K1 (strain S88 / ExPEC).